A 227-amino-acid chain; its full sequence is MAPYQIRQYQERDYKLVVGLFSRGMMEHIPAAFRYTLLLPQTLLFLFVMPLTIVLVFGSWLLAVICIFFLLLLLRLLAGQPFKDYVAQCLQTDMADITRSYLNAHGSFWVAESGGLVVGTVGGLPVKDPPLGRKQMQLFHLSVSSQHRGQGIAKALVRTVFQFARDQGYSDVVLETSVIQQSAITLYEAMGFQRTGKYSEISIIKWLITFSIIHFTYSFPSTQKHEL.

The next 3 membrane-spanning stretches (helical) occupy residues 29-49 (IPAA…LFVM), 53-73 (IVLV…LLLL), and 201-221 (ISII…SFPS). In terms of domain architecture, N-acetyltransferase spans 69–213 (FLLLLLRLLA…IKWLITFSII (145 aa)).

It belongs to the camello family.

Its subcellular location is the membrane. In terms of biological role, may play a role in regulation of gastrulation. In Mus musculus (Mouse), this protein is Probable N-acetyltransferase family 8 member 5.